The chain runs to 227 residues: Cytochrome c oxidase subunit 2 (227 aa).

Topologically, residues 1-14 (MAYPLQLGLQDATS) are mitochondrial intermembrane. A helical transmembrane segment spans residues 15 to 45 (PIMEELMNFHDHTLMIVFLISSLVLYIISLM). Over 46–59 (LTTKLTHTSTMDAQ) the chain is Mitochondrial matrix. The helical transmembrane segment at 60 to 87 (EVETIWTILPAAILVLIALPSLRILYMM) threads the bilayer. The Mitochondrial intermembrane segment spans residues 88-227 (DEINNPVLTV…YFENWSASMI (140 aa)). Residues His-161, Cys-196, Glu-198, Cys-200, His-204, and Met-207 each contribute to the Cu cation site. Glu-198 lines the Mg(2+) pocket. Position 218 is a phosphotyrosine (Tyr-218).

Belongs to the cytochrome c oxidase subunit 2 family. Component of the cytochrome c oxidase (complex IV, CIV), a multisubunit enzyme composed of 14 subunits. The complex is composed of a catalytic core of 3 subunits MT-CO1, MT-CO2 and MT-CO3, encoded in the mitochondrial DNA, and 11 supernumerary subunits COX4I, COX5A, COX5B, COX6A, COX6B, COX6C, COX7A, COX7B, COX7C, COX8 and NDUFA4, which are encoded in the nuclear genome. The complex exists as a monomer or a dimer and forms supercomplexes (SCs) in the inner mitochondrial membrane with NADH-ubiquinone oxidoreductase (complex I, CI) and ubiquinol-cytochrome c oxidoreductase (cytochrome b-c1 complex, complex III, CIII), resulting in different assemblies (supercomplex SCI(1)III(2)IV(1) and megacomplex MCI(2)III(2)IV(2)). Found in a complex with TMEM177, COA6, COX18, COX20, SCO1 and SCO2. Interacts with TMEM177 in a COX20-dependent manner. Interacts with COX20. Interacts with COX16. Requires Cu cation as cofactor.

It localises to the mitochondrion inner membrane. The enzyme catalyses 4 Fe(II)-[cytochrome c] + O2 + 8 H(+)(in) = 4 Fe(III)-[cytochrome c] + 2 H2O + 4 H(+)(out). Functionally, component of the cytochrome c oxidase, the last enzyme in the mitochondrial electron transport chain which drives oxidative phosphorylation. The respiratory chain contains 3 multisubunit complexes succinate dehydrogenase (complex II, CII), ubiquinol-cytochrome c oxidoreductase (cytochrome b-c1 complex, complex III, CIII) and cytochrome c oxidase (complex IV, CIV), that cooperate to transfer electrons derived from NADH and succinate to molecular oxygen, creating an electrochemical gradient over the inner membrane that drives transmembrane transport and the ATP synthase. Cytochrome c oxidase is the component of the respiratory chain that catalyzes the reduction of oxygen to water. Electrons originating from reduced cytochrome c in the intermembrane space (IMS) are transferred via the dinuclear copper A center (CU(A)) of subunit 2 and heme A of subunit 1 to the active site in subunit 1, a binuclear center (BNC) formed by heme A3 and copper B (CU(B)). The BNC reduces molecular oxygen to 2 water molecules using 4 electrons from cytochrome c in the IMS and 4 protons from the mitochondrial matrix. The polypeptide is Cytochrome c oxidase subunit 2 (MT-CO2) (Micaelamys namaquensis (Namaqua rock rat)).